Here is a 306-residue protein sequence, read N- to C-terminus: Palmitoyl-protein thioesterase ABHD10, mitochondrial (306 aa).

Residues 1-52 constitute a mitochondrion transit peptide; it reads MAVARLAAVAAWVPCRSWGCAAVPFGPHRGLSALLARIPQRAPRWLPACRQK. The 100-residue stretch at 78-177 folds into the AB hydrolase-1 domain; it reads IIFIPGYLSY…KVVALLGVAT (100 aa). Catalysis depends on charge relay system residues Ser152, Asp249, and His279.

This sequence belongs to the AB hydrolase superfamily.

It localises to the mitochondrion. The catalysed reaction is S-hexadecanoyl-L-cysteinyl-[protein] + H2O = L-cysteinyl-[protein] + hexadecanoate + H(+). It catalyses the reaction mycophenolic acid O-acyl-beta-D-glucuronide + H2O = mycophenolate + D-glucuronate + H(+). With respect to regulation, inhibited by palmostatin-B. Its function is as follows. Acts as an acyl-protein thioesterase that hydrolyzes fatty acids from acylated residues in proteins. Regulates the mitochondrial S-depalmitoylation of the nucleophilic active site residue of peroxiredoxin-5/PRDX5, a key antioxidant protein, therefore modulating mitochondrial antioxidant ability. Also catalyzes the deglucuronidation of mycophenolic acid acyl-glucuronide, an active metabolite of the immunosuppressant drug mycophenolate. This Pongo abelii (Sumatran orangutan) protein is Palmitoyl-protein thioesterase ABHD10, mitochondrial (ABHD10).